The sequence spans 895 residues: Androgen receptor (895 aa).

The segment at 1 to 533 (MEVQLGLGRV…PIDYYFPPQK (533 aa)) is modulating. The tract at residues 1 to 562 (MEVQLGLGRV…GSCKVFFKRA (562 aa)) is interaction with ZNF318. 2 disordered regions span residues 33–150 (VIQN…LSLL) and 175–211 (QLLQ…YLGG). Composition is skewed to low complexity over residues 44-81 (AASA…GSPQ) and 175-200 (QLLQ…ASGA). Serine 65 is subject to Phosphoserine; by CDK9. The residue at position 79 (serine 79) is a Phosphoserine. The span at 201 to 211 (PTSSKDNYLGG) shows a compositional bias: polar residues. Residue tyrosine 208 is modified to Phosphotyrosine; by CSK. Serine 241 bears the Phosphoserine mark. Residue tyrosine 252 is modified to Phosphotyrosine; by CSK and TNK2. Residues tyrosine 292, tyrosine 331, tyrosine 342, and tyrosine 347 each carry the phosphotyrosine; by CSK modification. Tyrosine 348 carries the phosphotyrosine; by CSK and TNK2 modification. Residue lysine 371 forms a Glycyl lysine isopeptide (Lys-Gly) (interchain with G-Cter in SUMO) linkage. At tyrosine 378 the chain carries Phosphotyrosine; by CSK. Lysine 496 is covalently cross-linked (Glycyl lysine isopeptide (Lys-Gly) (interchain with G-Cter in SUMO)). Residues tyrosine 510 and tyrosine 527 each carry the phosphotyrosine; by CSK modification. An interaction with LPXN region spans residues 527–894 (YYFPPQKTCL…GKVKPIYFHT (368 aa)). Positions 534 to 607 (TCLICGDEAS…AGMTLGARKL (74 aa)) form a DNA-binding region, nuclear receptor. NR C4-type zinc fingers lie at residues 535-555 (CLIC…CGSC) and 571-595 (CASR…LRKC). The interaction with HIPK3 stretch occupies residues 547 to 637 (YGALTCGSCK…TEETAQKLTV (91 aa)). Positions 567-894 (QKYLCASRND…GKVKPIYFHT (328 aa)) are interaction with CCAR1. An interaction with KAT7 region spans residues 600–894 (MTLGARKLKK…GKVKPIYFHT (295 aa)). Serine 626 is modified (phosphoserine; by STK4/MST1). The 232-residue stretch at 644–875 (ECQPIFLNVL…DFPEMMAEII (232 aa)) folds into the NR LBD domain. 2 residues coordinate 17beta-hydroxy-5alpha-androstan-3-one: asparagine 681 and arginine 728. Glycyl lysine isopeptide (Lys-Gly) (interchain with G-Cter in ubiquitin) cross-links involve residues lysine 821 and lysine 823. Residue threonine 853 participates in 17beta-hydroxy-5alpha-androstan-3-one binding. Residue tyrosine 891 is modified to Phosphotyrosine; by CSK.

It belongs to the nuclear hormone receptor family. NR3 subfamily. Binds DNA as a homodimer. Part of a ternary complex containing AR, EFCAB6/DJBP and PARK7. Interacts with HIPK3 and NR0B2 in the presence of androgen. The ligand binding domain interacts with KAT7/HBO1 in the presence of dihydrotestosterone. Interacts with EFCAB6/DJBP, PQBP1, RANBP9, RBAK, SPDEF, SRA1, TGFB1I1 and RREB1. Interacts with ZMIZ1/ZIMP10 and ZMIZ2/ZMIP7 which both enhance its transactivation activity. Interacts with SLC30A9 and RAD54L2/ARIP4. Interacts with MACROD1 (via macro domain). Interacts via the ligand-binding domain with LXXLL and FXXLF motifs from NCOA1, NCOA2, NCOA3 and MAGEA11. Interacts (via nuclear receptor DNA binding domain and nuclear receptor ligand binding domain) with NCOA4. The AR N-terminal poly-Gln region binds Ran resulting in enhancement of AR-mediated transactivation. Ran-binding decreases as the poly-Gln length increases. Interacts with HIP1 (via coiled coil domain). Interacts (via ligand-binding domain) with TRIM68. Interacts with TNK2. Interacts with USP26. Interacts with RNF6. Interacts (regulated by RNF6 probably through polyubiquitination) with RNF14; regulates AR transcriptional activity. Interacts with PRMT2 and TRIM24. Interacts with RACK1. Interacts with RANBP10; this interaction enhances dihydrotestosterone-induced AR transcriptional activity. Interacts with PRPF6 in a hormone-independent way; this interaction enhances dihydrotestosterone-induced AR transcriptional activity. Interacts with STK4/MST1. Interacts with ZIPK/DAPK3. Interacts with LPXN. Interacts with MAK. Part of a complex containing AR, MAK and NCOA3. Interacts with CRY1. Interacts with CCAR1 and GATA2. Interacts with ZNF318. Interacts with BUD31. Interacts with ARID4A. Interacts with ARID4B. Interacts (via NR LBD domain) with ZBTB7A; the interaction is direct and androgen-dependent. Interacts with NCOR1. Interacts with NCOR2. Interacts with CRY2 in a ligand-dependent manner. Phosphorylated in prostate cancer cells in response to several growth factors including EGF. Phosphorylation is induced by c-Src kinase (CSK). Tyr-510 is one of the major phosphorylation sites and an increase in phosphorylation and Src kinase activity is associated with prostate cancer progression. Phosphorylation by TNK2 enhances the DNA-binding and transcriptional activity. Phosphorylation at Ser-65 by CDK9 regulates AR promoter selectivity and cell growth. In terms of processing, sumoylated on Lys-371 (major) and Lys-496. Ubiquitinated. Deubiquitinated by USP26. 'Lys-6' and 'Lys-27'-linked polyubiquitination by RNF6 modulates AR transcriptional activity and specificity. Post-translationally, palmitoylated by ZDHHC7 and ZDHHC21. Palmitoylation is required for plasma membrane targeting and for rapid intracellular signaling via ERK and AKT kinases and cAMP generation.

It is found in the nucleus. The protein localises to the cytoplasm. In terms of biological role, steroid hormone receptors are ligand-activated transcription factors that regulate eukaryotic gene expression and affect cellular proliferation and differentiation in target tissues. Transcription factor activity is modulated by bound coactivator and corepressor proteins like ZBTB7A that recruits NCOR1 and NCOR2 to the androgen response elements/ARE on target genes, negatively regulating androgen receptor signaling and androgen-induced cell proliferation. Transcription activation is also down-regulated by NR0B2. Activated, but not phosphorylated, by HIPK3 and ZIPK/DAPK3. The polypeptide is Androgen receptor (AR) (Macaca fascicularis (Crab-eating macaque)).